Here is a 520-residue protein sequence, read N- to C-terminus: Cell division control protein 3 (520 aa).

Residues Met-1–Phe-24 show a composition bias toward basic and acidic residues. Positions Met-1–Leu-83 are disordered. Position 2 is an N-acetylserine (Ser-2). Phosphoserine is present on Ser-2. Residue Lys-4 forms a Glycyl lysine isopeptide (Lys-Gly) (interchain with G-Cter in SUMO) linkage. Position 9 is a phosphoserine (Ser-9). Residues Lys-11 and Lys-30 each participate in a glycyl lysine isopeptide (Lys-Gly) (interchain with G-Cter in SUMO) cross-link. Residue Thr-47 is modified to Phosphothreonine. Residues Asp-51–Val-64 are compositionally biased toward basic and acidic residues. Phosphoserine is present on Ser-60. A Glycyl lysine isopeptide (Lys-Gly) (interchain with G-Cter in SUMO) cross-link involves residue Lys-63. Ser-77 carries the post-translational modification Phosphoserine. The Septin-type G domain maps to Asn-116–Lys-411. The G1 motif stretch occupies residues Gly-126–Thr-133. A GTP-binding site is contributed by Gly-126 to Thr-133. Positions Glu-156–Gln-167 are enriched in acidic residues. The disordered stretch occupies residues Glu-156–Lys-181. Residues Gly-168–Arg-179 show a composition bias toward basic and acidic residues. Ser-175 carries the post-translational modification Phosphoserine. Residues Asp-204 to Gly-207 form a G3 motif region. GTP is bound by residues Gly-207, Lys-287–Glu-295, Gly-344, and Arg-360. The tract at residues Ala-286–Asp-289 is G4 motif. Lys-287 participates in a covalent cross-link: Glycyl lysine isopeptide (Lys-Gly) (interchain with G-Cter in SUMO). Residues Ile-427–His-508 adopt a coiled-coil conformation. Thr-468 is subject to Phosphothreonine. Residues Glu-496–Arg-520 form a disordered region. Residues Leu-497 to Pro-510 are compositionally biased toward polar residues. Residue Ser-509 is modified to Phosphoserine.

The protein belongs to the TRAFAC class TrmE-Era-EngA-EngB-Septin-like GTPase superfamily. Septin GTPase family. In terms of assembly, component of the septin complex which consists of CDC3, CDC10, CDC11, CDC12 and probably SHS1 and rearranges to a cortical collar of highly ordered filaments at the mother-bud-neck. A complex formed by CDC3, CDC10, CDC11 and CDC12 is capable of forming long filaments in vitro and the components seem to be present in a 2:2:2:2 arrangement in vivo. The filaments are proposed to be formed by the end-to-end polymerization of CDC3-CDC12-CDC11 complexes with CDC10 serving as a bridge to bundle the polymers into paired filaments. Component of the GIN4 complex composed of at least BNI5, CDC3, CDC10, CDC11, CDC12, GIN4, NAP1 and SHS1. Self-associates. Interacts with SIZ1 and SYP1. Post-translationally, phosphorylated by CDC28. Phosphorylation at the end of G1 may facilitate initiation of a new cell cycle by promoting disassembly of the obsolete septin ring from the previous cell cycle. In terms of processing, sumoylated during mitosis on the mother cell side of the bud neck by UBC9/SIZ1. Sumoylation probably plays a central role in regulating septin ring disassembly during the cell cycle.

It localises to the membrane. The protein localises to the bud neck. Functionally, septins are GTPases involved in cytokinesis that assemble early in the cell cycle as a patch at the incipient bud site and form a ring approximate 15 minutes before bud emergence, which transforms into an hour-glass shaped collar of cortical filaments that spans both sides of the mother-bud neck. This collar persists until just before cytokinesis, when it splits into two rings that occupy opposite sides of the neck. The septins at the bud neck serve as a structural scaffold that recruits different components involved in diverse processes at specific stages during the cell cycle. Many proteins bind asymmetrically to the septin collar. The septin assembly is regulated by protein kinases GIN4 and/or CLA4. May act by recruiting MYO1 and HOF1, a protein involved in septation, to the site of cleavage. Septins are also involved in cell morphogenesis, bud site selection, chitin deposition, cell cycle regulation, cell compartmentalization and spore wall formation. The protein is Cell division control protein 3 (CDC3) of Saccharomyces cerevisiae (strain ATCC 204508 / S288c) (Baker's yeast).